We begin with the raw amino-acid sequence, 530 residues long: Seeligeriolysin (530 aa).

An N-terminal signal peptide occupies residues 1-25 (MKIFGLVIMSLLFVSLPITQQPEAR). The disordered stretch occupies residues 36-55 (TISPAETPESPPATPKTPVE). Transmembrane regions (beta stranded) follow at residues 215 to 228 (ESQL…AFKA), 235 to 244 (VNFEAISDGK), 313 to 322 (SNKVKTAFEA), and 330 to 342 (KGDV…IKNS). The short motif at 484 to 494 (ECTGLFWEWWR) is the Conserved undecapeptide element. Positions 516–517 (TL) match the Cholesterol binding motif.

This sequence belongs to the cholesterol-dependent cytolysin family. Homooligomeric pore complex of 35 to 50 subunits; when inserted in the host membrane.

The protein resides in the secreted. It localises to the host cell membrane. In terms of biological role, a cholesterol-dependent toxin that causes cytolysis by forming pores in cholesterol containing host membranes. L.seeligeri is non-pathogenic, perhaps in part because this protein is about 25% as toxic as listeriolysin O. Mutating a single residue in the undecapeptide increases toxicity 2-fold. After binding to target membranes, the protein undergoes a major conformation change, leading to its insertion in the host membrane and formation of an oligomeric pore complex. Cholesterol is required for binding to host membranes, membrane insertion and pore formation; cholesterol binding is mediated by a Thr-Leu pair in the C-terminus. Can be reversibly inactivated by oxidation. This is Seeligeriolysin from Listeria seeligeri.